We begin with the raw amino-acid sequence, 842 residues long: Translation initiation factor IF-2 (842 aa).

Disordered regions lie at residues 1–41 (MVAK…GFPD) and 112–219 (RPNR…QTYQ). Basic and acidic residues-rich tracts occupy residues 32-41 (PEDKKQGFPD) and 153-165 (RRGE…RDFS). One can recognise a tr-type G domain in the interval 328–497 (ARPPVVTVMG…MLQAEVMELR (170 aa)). The segment at 337 to 344 (GHVDHGKT) is G1. 337 to 344 (GHVDHGKT) provides a ligand contact to GTP. The tract at residues 362 to 366 (GITQH) is G2. Residues 383-386 (DTPG) are G3. GTP contacts are provided by residues 383-387 (DTPGH) and 437-440 (NKID). The tract at residues 437 to 440 (NKID) is G4. The segment at 473–475 (SAL) is G5.

This sequence belongs to the TRAFAC class translation factor GTPase superfamily. Classic translation factor GTPase family. IF-2 subfamily.

Its subcellular location is the cytoplasm. In terms of biological role, one of the essential components for the initiation of protein synthesis. Protects formylmethionyl-tRNA from spontaneous hydrolysis and promotes its binding to the 30S ribosomal subunits. Also involved in the hydrolysis of GTP during the formation of the 70S ribosomal complex. The polypeptide is Translation initiation factor IF-2 (infB) (Treponema pallidum (strain Nichols)).